We begin with the raw amino-acid sequence, 198 residues long: Glycerol-3-phosphate acyltransferase (198 aa).

A run of 5 helical transmembrane segments spans residues 2–22, 55–75, 88–108, 118–138, and 162–182; these read IIVI…TGYL, MITQ…CMLI, YLSI…FLGF, VGAF…VYFV, and IALR…GLLI.

Belongs to the PlsY family. In terms of assembly, probably interacts with PlsX.

The protein localises to the cell membrane. It carries out the reaction an acyl phosphate + sn-glycerol 3-phosphate = a 1-acyl-sn-glycero-3-phosphate + phosphate. It participates in lipid metabolism; phospholipid metabolism. Catalyzes the transfer of an acyl group from acyl-phosphate (acyl-PO(4)) to glycerol-3-phosphate (G3P) to form lysophosphatidic acid (LPA). This enzyme utilizes acyl-phosphate as fatty acyl donor, but not acyl-CoA or acyl-ACP. The chain is Glycerol-3-phosphate acyltransferase from Clostridium acetobutylicum (strain ATCC 824 / DSM 792 / JCM 1419 / IAM 19013 / LMG 5710 / NBRC 13948 / NRRL B-527 / VKM B-1787 / 2291 / W).